Consider the following 468-residue polypeptide: 6-phospho-beta-galactosidase (468 aa).

D-galactose 6-phosphate is bound by residues glutamine 19, histidine 116, asparagine 159, glutamate 160, and asparagine 297. Residue glutamate 160 is the Proton donor of the active site. The active-site Nucleophile is the glutamate 375. D-galactose 6-phosphate-binding residues include serine 428, tryptophan 429, lysine 435, and tyrosine 437.

This sequence belongs to the glycosyl hydrolase 1 family.

It catalyses the reaction a 6-phospho-beta-D-galactoside + H2O = D-galactose 6-phosphate + an alcohol. It functions in the pathway carbohydrate metabolism; lactose degradation; D-galactose 6-phosphate and beta-D-glucose from lactose 6-phosphate: step 1/1. In Streptococcus gordonii (strain Challis / ATCC 35105 / BCRC 15272 / CH1 / DL1 / V288), this protein is 6-phospho-beta-galactosidase.